The chain runs to 1494 residues: DNA-directed RNA polymerase subunit beta' (1494 aa).

The Zn(2+) site is built by C67, C69, C82, and C85. 3 residues coordinate Mg(2+): D499, D501, and D503. Positions 868, 944, 951, and 954 each coordinate Zn(2+).

It belongs to the RNA polymerase beta' chain family. In terms of assembly, the RNAP catalytic core consists of 2 alpha, 1 beta, 1 beta' and 1 omega subunit. When a sigma factor is associated with the core the holoenzyme is formed, which can initiate transcription. Requires Mg(2+) as cofactor. The cofactor is Zn(2+).

It catalyses the reaction RNA(n) + a ribonucleoside 5'-triphosphate = RNA(n+1) + diphosphate. Functionally, DNA-dependent RNA polymerase catalyzes the transcription of DNA into RNA using the four ribonucleoside triphosphates as substrates. The chain is DNA-directed RNA polymerase subunit beta' from Chlorobaculum parvum (strain DSM 263 / NCIMB 8327) (Chlorobium vibrioforme subsp. thiosulfatophilum).